The chain runs to 719 residues: Probable phosphatidylinositol phosphate kinase DDB_G0267588 (719 aa).

The tract at residues 47–261 is disordered; that stretch reads VFSPIPPPPS…SDSPNRVRLN (215 aa). 2 stretches are compositionally biased toward low complexity: residues 57–77 and 87–104; these read TTDN…TDNT and IENN…PNSI. Residues 107 to 129 are compositionally biased toward basic and acidic residues; sequence ANKKDSIELEEDKEHSIKRKDGS. The span at 172-184 shows a compositional bias: polar residues; it reads FDATNDNHNPQEV. Residues 199–217 show a composition bias toward low complexity; that stretch reads TTTTTTTTTTTTSTNSTSN. Composition is skewed to polar residues over residues 218 to 228 and 248 to 261; these read KLPNNGDNTVS and ASGS…VRLN. At Thr262 the chain carries Phosphothreonine. Residues 316–718 enclose the PIPK domain; sequence NAVGKSMGTE…RFQEFLSTII (403 aa). The disordered stretch occupies residues 579–638; sequence RENEPPSPSLLRSTLEDSSDFESPSMEQSSAGQQQQQRGSGNYDNSGAGRDSTTGGAAPK. A compositionally biased stretch (low complexity) spans 606 to 619; it reads QSSAGQQQQQRGSG.

In terms of processing, phosphorylated at Thr-262 by pkgB.

In terms of biological role, may be involved in signaling events that underlie chemotaxis via the chemoattractant-mediated pkgB phosphorylation. This Dictyostelium discoideum (Social amoeba) protein is Probable phosphatidylinositol phosphate kinase DDB_G0267588.